Reading from the N-terminus, the 1381-residue chain is MKAPAVLAPGILVLLFTLVQRSNGECKEALTKSEMNVNMKYQLPNFTAETPIQNVILHEHHIFLGATNYIYVLNEEDLQKVAEYRTGPVLEHPDCFPCQDCSSKANLSGGVWKDNINMALVVDTYYDDQLISCGSVNRGTCQRHVFPHNHTADIQSEVHCIFSAQTEEPSQCPDCMVSALGTKVLLSVKDRFLNFFVGNTINSSYFPDHSLHSISVRRLKETKDGFMFLTDQSYVDVLPEFRDSYPIKYVHAFESNNFIYFLTVQRETLNAQTFHTRIIRFCSINSALHSYMEMPLECILTEKRKKRSTKKEVFNILQAAYVSKPGAQLARQIGASLNDDILFGVFAQSKPDSAEPMDRSAVCAFPIKYVNDFFNKIVNKNNVRCLQHFYGPNHEHCFNRTFQRNLLGCEARHDEYRTEFTTALQRIDLFAGQFNKVLLTSISTFIKGDLTIANLGTSEGRFIQIVVSRSVPSNPHVNFLLDSHPVSPEVIVEHPLNQNGYTLVVTGKKITKIPLNGLGCRHFQSCSQCLSAPSFVQCGWCHDKCVRSEECSSGTWTQETCLPTIYKVFPTSAPLEGGTRLTICGWDFGFRRNNKFDLKKTRVLLGNESCTLTLSESTMNTLKCTVGPAMNERFNMSIIISNAHGTTQYSTFSYVDPIITSISPRYGPMSGGTLLTLTGNYLNSGNSRHISIGGKTCTLKSVSNSILECYTPAQSISTEFPVKLKIDLANRETSIFSYREDPIVYEIYPTKSFVSGGSTITGIGKNLNSVSVPRMVINLHEAKRNFTVACQHRSNSEIICCTTPSLQQLNLQLPLKTKAFFMLDGILSKYFDLIYVHNPVFKPFEKPVMISIGNENVLEIKGNDIDPEAVKGEVLKVGNKSCENIHLHSEAVLCTVPGDLLKLNSELNIEWKQAISSTVLGKVIVQPDQNFTGLVAGVVSISIALLLLLGLFLWLKKKKQIKDLGSELVRYDARVHTPHLDRLVSARSVSPTTEMVSNESVDYRATFPEDQFPNSSQNGSCRQVQYPLTDMSPILTSGDSDISSPLLQNTVHIDLSALNPELVQAVQHVVIGPSSLIVHFNEVIGRGHFGCVYHGTLLDNDGKKIHCAVKSLNRITDIGEVSQFLTEGIIMKDFSHPNVLSLLGICLRSEGSPLVVLPYMKHGDLRNFIRNETHNPTVKDLIGFGLQVAKGMKYLASKKFVHRDLAARNCMLDEKFTVKVADFGLARDMYDKEYYSVHNKTGAKLPVKWMALESLQTQKFTTKSDVWSFGVLLWELMTRGAPPYPDVNTFDITVYLLQGRRLLQPEYCPDPLYEVMLKCWHPKAEMRPSFSELVSRISAIFSTFIGEHYVHVNATYVNVKCVAPYPSLLSSQDNTDGEVDT.

An N-terminal signal peptide occupies residues 1 to 24 (MKAPAVLAPGILVLLFTLVQRSNG). Residues 25–934 (ECKEALTKSE…VQPDQNFTGL (910 aa)) are Extracellular-facing. Residues 27–515 (KEALTKSEMN…TGKKITKIPL (489 aa)) enclose the Sema domain. An N-linked (GlcNAc...) asparagine glycan is attached at Asn-45. Intrachain disulfides connect Cys-95/Cys-101, Cys-98/Cys-160, Cys-133/Cys-141, and Cys-172/Cys-175. A glycan (N-linked (GlcNAc...) asparagine) is linked at Asn-106. The N-linked (GlcNAc...) asparagine glycan is linked to Asn-149. Residue Asn-202 is glycosylated (N-linked (GlcNAc...) asparagine). 2 cysteine pairs are disulfide-bonded: Cys-298–Cys-363 and Cys-385–Cys-397. Asn-399 is a glycosylation site (N-linked (GlcNAc...) asparagine). Intrachain disulfides connect Cys-520/Cys-538, Cys-526/Cys-561, Cys-529/Cys-545, and Cys-541/Cys-551. IPT/TIG domains are found at residues 563–655 (PTIY…FSYV), 657–739 (PIIT…FSYR), and 742–836 (PIVY…LIYV). Thr-582 carries O-linked (Man) threonine glycosylation. N-linked (GlcNAc...) asparagine glycosylation is found at Asn-607 and Asn-635. Residues Thr-676 and Thr-761 are each glycosylated (O-linked (Man) threonine). Asn-785, Asn-879, and Asn-930 each carry an N-linked (GlcNAc...) asparagine glycan. The helical transmembrane segment at 935–955 (VAGVVSISIALLLLLGLFLWL) threads the bilayer. Residues 956–1381 (KKKKQIKDLG…QDNTDGEVDT (426 aa)) are Cytoplasmic-facing. Position 966 is a phosphoserine (Ser-966). A Phosphothreonine modification is found at Thr-977. Phosphoserine is present on residues Ser-990, Ser-997, and Ser-1000. Residue Tyr-1003 is modified to Phosphotyrosine. Residues 1078–1345 (VHFNEVIGRG…RISAIFSTFI (268 aa)) form the Protein kinase domain. Residues 1084-1092 (IGRGHFGCV) and Lys-1110 contribute to the ATP site. Asp-1204 (proton acceptor) is an active-site residue. Positions 1212 to 1381 (LDEKFTVKVA…QDNTDGEVDT (170 aa)) are interaction with RANBP9. Tyr-1230 carries the post-translational modification Phosphotyrosine. Phosphotyrosine; by autocatalysis is present on residues Tyr-1234 and Tyr-1235. Position 1289 is a phosphothreonine (Thr-1289). The interaction with MUC20 stretch occupies residues 1320-1359 (WHPKAEMRPSFSELVSRISAIFSTFIGEHYVHVNATYVNV). Residues Tyr-1349 and Tyr-1356 each carry the phosphotyrosine; by autocatalysis modification. Tyr-1365 carries the phosphotyrosine modification.

Belongs to the protein kinase superfamily. Tyr protein kinase family. In terms of assembly, heterodimer made of an alpha chain (50 kDa) and a beta chain (145 kDa) which are disulfide linked. Binds PLXNB1. Interacts when phosphorylated with downstream effectors including STAT3, PIK3R1, SRC, PCLG1, GRB2 and GAB1. Interacts with SPSB1, SPSB2 and SPSB4. Interacts with INPP5D/SHIP1. When phosphorylated at Tyr-1356, interacts with INPPL1/SHIP2. Interacts with RANBP9 and RANBP10, as well as SPSB1, SPSB2, SPSB3 and SPSB4. SPSB1 binding occurs in the presence and in the absence of HGF, however HGF treatment has a positive effect on this interaction. Interacts with MUC20; prevents interaction with GRB2 and suppresses hepatocyte growth factor-induced cell proliferation. Interacts with GRB10. Interacts with PTPN1 and PTPN2. Interacts with HSP90AA1 and HSP90AB1; the interaction suppresses MET kinase activity. Interacts with tensin TNS3. Interacts (when phosphorylated) with tensin TNS4 (via SH2 domain); the interaction increases MET protein stability by inhibiting MET endocytosis and subsequent lysosomal degradation. Autophosphorylated in response to ligand binding on Tyr-1234 and Tyr-1235 in the kinase domain leading to further phosphorylation of Tyr-1349 and Tyr-1356 in the C-terminal multifunctional docking site. Dephosphorylated by PTPRJ at Tyr-1349 and Tyr-1365. Dephosphorylated by PTPN1 and PTPN2. In terms of processing, ubiquitinated. Ubiquitination by CBL regulates the receptor stability and activity through proteasomal degradation. Post-translationally, O-mannosylation of IPT/TIG domains by TMEM260 is required for protein maturation. O-mannosylated residues are composed of single mannose glycans that are not elongated or modified.

Its subcellular location is the membrane. The catalysed reaction is L-tyrosyl-[protein] + ATP = O-phospho-L-tyrosyl-[protein] + ADP + H(+). Functionally, receptor tyrosine kinase that transduces signals from the extracellular matrix into the cytoplasm by binding to hepatocyte growth factor/HGF ligand. Regulates many physiological processes including proliferation, scattering, morphogenesis and survival. Ligand binding at the cell surface induces autophosphorylation of MET on its intracellular domain that provides docking sites for downstream signaling molecules. Following activation by ligand, interacts with the PI3-kinase subunit PIK3R1, PLCG1, SRC, GRB2, STAT3 or the adapter GAB1. Recruitment of these downstream effectors by MET leads to the activation of several signaling cascades including the RAS-ERK, PI3 kinase-AKT, or PLCgamma-PKC. The RAS-ERK activation is associated with the morphogenetic effects while PI3K/AKT coordinates prosurvival effects. During embryonic development, MET signaling plays a role in gastrulation, development and migration of muscles and neuronal precursors, angiogenesis and kidney formation. In adults, participates in wound healing as well as organ regeneration and tissue remodeling. Also promotes differentiation and proliferation of hematopoietic cells. The chain is Hepatocyte growth factor receptor (MET) from Callithrix jacchus (White-tufted-ear marmoset).